Here is a 57-residue protein sequence, read N- to C-terminus: Small ribosomal subunit protein bS21 (57 aa).

This sequence belongs to the bacterial ribosomal protein bS21 family.

The protein is Small ribosomal subunit protein bS21 of Bacillus anthracis (strain A0248).